The primary structure comprises 421 residues: Phosphatidylinositol 5-phosphate 4-kinase type-2 gamma (421 aa).

Alanine 2 carries the post-translational modification N-acetylalanine. Serine 26 is subject to Phosphoserine. The PIPK domain occupies 43-420 (AADPLVGVFL…RFLDFIANIF (378 aa)). A required for interaction with PIP5K1A region spans residues 69 to 75 (VMLLPDD). A Phosphoserine modification is found at serine 349.

Interacts with PIP5K1A; the interaction inhibits PIP5K1A kinase activity. In terms of processing, phosphorylated, phosphorylation is induced by EGF.

It localises to the endoplasmic reticulum. Its subcellular location is the cytoplasm. It catalyses the reaction a 1,2-diacyl-sn-glycero-3-phospho-(1D-myo-inositol-5-phosphate) + ATP = a 1,2-diacyl-sn-glycero-3-phospho-(1D-myo-inositol-4,5-bisphosphate) + ADP + H(+). The enzyme catalyses 1,2-dihexadecanoyl-sn-glycero-3-phospho-(1D-myo-inositol-5-phosphate) + ATP = 1,2-dihexadecanoyl-sn-glycero-3-phospho-(1D-myo-inositol-4,5-bisphosphate) + ADP + H(+). The catalysed reaction is 1,2-dihexadecanoyl-sn-glycero-3-phospho-(1D-myo-inositol-5-phosphate) + GTP = 1,2-dihexadecanoyl-sn-glycero-3-phospho-(1D-myo-inositol-4,5-bisphosphate) + GDP + H(+). Its function is as follows. Phosphatidylinositol 5-phosphate 4-kinase with low enzymatic activity. May be a GTP sensor, has higher GTP-dependent kinase activity than ATP-dependent kinase activity. PIP4Ks negatively regulate insulin signaling through a catalytic-independent mechanism. They interact with PIP5Ks and suppress PIP5K-mediated PtdIns(4,5)P2 synthesis and insulin-dependent conversion to PtdIns(3,4,5)P3. The sequence is that of Phosphatidylinositol 5-phosphate 4-kinase type-2 gamma from Mus musculus (Mouse).